Reading from the N-terminus, the 98-residue chain is C-X-C motif chemokine 10 (98 aa).

Positions 1-21 are cleaved as a signal peptide; the sequence is MNPSAAVIFCLILLGLSGTQG. R26 carries the citrulline modification. Intrachain disulfides connect C30–C57 and C32–C74.

This sequence belongs to the intercrine alpha (chemokine CxC) family. Monomer, dimer, and tetramer. Interacts with CXCR3 (via N-terminus). In terms of tissue distribution, expressed in the spleen, thymus, lymph nodes and liver. Expressed in astrocytes, microglia, and neurons.

Its subcellular location is the secreted. In terms of biological role, pro-inflammatory cytokine that is involved in a wide variety of processes such as chemotaxis, differentiation, and activation of peripheral immune cells, regulation of cell growth, apoptosis and modulation of angiostatic effects. Plays thereby an important role during viral infections by stimulating the activation and migration of immune cells to the infected sites. Mechanistically, binding of CXCL10 to the CXCR3 receptor activates G protein-mediated signaling and results in downstream activation of phospholipase C-dependent pathway, an increase in intracellular calcium production and actin reorganization. In turn, recruitment of activated Th1 lymphocytes occurs at sites of inflammation. Activation of the CXCL10/CXCR3 axis also plays an important role in neurons in response to brain injury for activating microglia, the resident macrophage population of the central nervous system, and directing them to the lesion site. This recruitment is an essential element for neuronal reorganization. The polypeptide is C-X-C motif chemokine 10 (Cxcl10) (Mus musculus (Mouse)).